Here is a 279-residue protein sequence, read N- to C-terminus: Tryptophan synthase alpha chain (279 aa).

Residues Glu-50 and Asp-61 each act as proton acceptor in the active site.

The protein belongs to the TrpA family. In terms of assembly, tetramer of two alpha and two beta chains.

It catalyses the reaction (1S,2R)-1-C-(indol-3-yl)glycerol 3-phosphate + L-serine = D-glyceraldehyde 3-phosphate + L-tryptophan + H2O. It functions in the pathway amino-acid biosynthesis; L-tryptophan biosynthesis; L-tryptophan from chorismate: step 5/5. Its function is as follows. The alpha subunit is responsible for the aldol cleavage of indoleglycerol phosphate to indole and glyceraldehyde 3-phosphate. This Brucella abortus (strain S19) protein is Tryptophan synthase alpha chain.